The primary structure comprises 249 residues: Transmembrane protein 150C (249 aa).

Residues 1–9 (MDGKKCSVW) lie on the Cytoplasmic side of the membrane. The chain crosses the membrane as a helical span at residues 10 to 30 (MFLPLVFTLFTSAGLWIVYFI). At 31–64 (AVEDDKILPLNSAERKPGVKHAPYISIAGDDPPA) the chain is on the extracellular side. A helical transmembrane segment spans residues 65-85 (SCVFSQVMNMAAFLALVVAVL). The Cytoplasmic portion of the chain corresponds to 86–97 (RFIQLKPKVLNP). The chain crosses the membrane as a helical span at residues 98-118 (WLNISGLVALCLASFGMTLLG). Over 119 to 130 (NFQLTNDEEIHN) the chain is Extracellular. A helical membrane pass occupies residues 131–151 (VGTSLTFGFGTLTCWIQAALT). Residues 152-168 (LKVNIKNEGRRVGIPRV) are Cytoplasmic-facing. A helical transmembrane segment spans residues 169-189 (ILSASITLCVVLYFILMAQSI). Residues 190–192 (HMY) lie on the Extracellular side of the membrane. Residues 193–213 (AARVQWGLVMCFLSYFGTFAV) form a helical membrane-spanning segment. Over 214-249 (EFRHYRYEIVCSEYQENFLSFSESLSEASEYQTDQV) the chain is Cytoplasmic.

This sequence belongs to the DRAM/TMEM150 family.

The protein localises to the cell membrane. It localises to the lysosome membrane. It catalyses the reaction Ca(2+)(in) = Ca(2+)(out). The enzyme catalyses Na(+)(in) = Na(+)(out). The catalysed reaction is K(+)(in) = K(+)(out). It carries out the reaction Mg(2+)(in) = Mg(2+)(out). Nonselective cationic channel with high permeability to Ca(2+). Component of a mechanosensitive cation channel, confers mechanically activated (MA) currents with slow inactivation kinetics. May contribute to proprioception. This is Transmembrane protein 150C from Homo sapiens (Human).